Here is a 676-residue protein sequence, read N- to C-terminus: Serine/threonine-protein kinase Haspin homolog ALK2 (676 aa).

A disordered region spans residues 53-93 (HKGSAEDESQSFFTSSDSPTSKTRPVGKTIENDDYYGKRSS). Residues 62–75 (QSFFTSSDSPTSKT) show a composition bias toward polar residues. The KEN box motif lies at 116–118 (KEN). The D box signature appears at 150–158 (RTPLRPISN). Residues 228–312 (SSRSVNDQDP…HKTSHSSLNK (85 aa)) form a disordered region. Residues 232-259 (VNDQDPNFVQPKPTNSLQKKSSISSFHN) show a composition bias toward polar residues. The 290-residue stretch at 383 to 672 (LCDVKYILHD…TCGDLLSLKG (290 aa)) folds into the Protein kinase domain. ATP is bound by residues 389–397 (ILHDLREAQ) and lysine 430.

This sequence belongs to the protein kinase superfamily. Ser/Thr protein kinase family. Haspin subfamily. Post-translationally, periodically phosphorylated during the cell cycle with a phosphorylation peak during mitosis and hyperphosphorylated after DNA damage.

The catalysed reaction is L-seryl-[protein] + ATP = O-phospho-L-seryl-[protein] + ADP + H(+). It catalyses the reaction L-threonyl-[protein] + ATP = O-phospho-L-threonyl-[protein] + ADP + H(+). Functionally, serine/threonine haspin-like protein kinase involved in cell cycle regulation. The sequence is that of Serine/threonine-protein kinase Haspin homolog ALK2 (ALK2) from Saccharomyces cerevisiae (strain ATCC 204508 / S288c) (Baker's yeast).